A 353-amino-acid chain; its full sequence is 4-hydroxy-2-oxovalerate aldolase 2 (353 aa).

Residues 14-266 enclose the Pyruvate carboxyltransferase domain; sequence VRMTDTSLRD…KTGIDFFDIA (253 aa). Position 22–23 (22–23) interacts with substrate; sequence RD. Asp-23 contacts Mn(2+). The active-site Proton acceptor is His-26. The substrate site is built by Ser-176 and His-205. Residues His-205 and His-207 each coordinate Mn(2+). Substrate is bound at residue Tyr-296.

The protein belongs to the 4-hydroxy-2-oxovalerate aldolase family.

The catalysed reaction is (S)-4-hydroxy-2-oxopentanoate = acetaldehyde + pyruvate. The polypeptide is 4-hydroxy-2-oxovalerate aldolase 2 (Mycobacterium sp. (strain JLS)).